The primary structure comprises 88 residues: Small ribosomal subunit protein uS15c (88 aa).

Belongs to the universal ribosomal protein uS15 family. Part of the 30S ribosomal subunit.

It is found in the plastid. The protein localises to the chloroplast. This chain is Small ribosomal subunit protein uS15c (rps15), found in Cycas taitungensis (Prince sago).